Reading from the N-terminus, the 82-residue chain is MIIKEFLATEKAVKLIESQNTLTIIVNRNTTKKDIKNEVEKLFSVKVEKINTLITPKGEKKAYVKLKQEYKASDVAHKLGML.

Belongs to the universal ribosomal protein uL23 family. In terms of assembly, part of the 50S ribosomal subunit. Contacts protein L29.

In terms of biological role, binds to 23S rRNA. One of the proteins that surrounds the polypeptide exit tunnel on the outside of the ribosome. This chain is Large ribosomal subunit protein uL23, found in Sulfolobus acidocaldarius (strain ATCC 33909 / DSM 639 / JCM 8929 / NBRC 15157 / NCIMB 11770).